The primary structure comprises 258 residues: Membrane-associated protein Vipp1 (258 aa).

The segment at 217 to 258 is disordered; the sequence is MLPPATPVTQAQLPPQQETTPAKSNEVVDAELDSLRKQLDQL. The segment covering 223 to 239 has biased composition (polar residues); that stretch reads PVTQAQLPPQQETTPAK. Basic and acidic residues predominate over residues 249–258; that stretch reads DSLRKQLDQL.

It belongs to the PspA/Vipp/IM30 family. Polymerizes to form rings, filaments and ribbons. Rings are formed by stacked rungs that tilt to give a dome-shaped curvature. Rings form with symmetries ranging from C11 (55 subunits) to C17 (119 subunits).

The protein resides in the cell inner membrane. A membrane remodeling protein capable of forming rings and/or filaments on membranes, which then curve and tubulate the bilayer. Rings will form on liposomes, altering their positive curvature so the lipid bilayer is remodeled into a negative curve as the membrane enters the ring. Ring stacks of varying lengths can be seen joining isolated liposomes. A lipid monolayer can be drawn into the center of the rings. Required for thylakoid formation. In Nostoc punctiforme (strain ATCC 29133 / PCC 73102), this protein is Membrane-associated protein Vipp1.